A 273-amino-acid chain; its full sequence is Bis(5'-nucleosyl)-tetraphosphatase, symmetrical (273 aa).

This sequence belongs to the Ap4A hydrolase family.

The enzyme catalyses P(1),P(4)-bis(5'-adenosyl) tetraphosphate + H2O = 2 ADP + 2 H(+). In terms of biological role, hydrolyzes diadenosine 5',5'''-P1,P4-tetraphosphate to yield ADP. The sequence is that of Bis(5'-nucleosyl)-tetraphosphatase, symmetrical from Proteus mirabilis (strain HI4320).